The sequence spans 161 residues: Protein-export protein SecB (161 aa).

This sequence belongs to the SecB family. In terms of assembly, homotetramer, a dimer of dimers. One homotetramer interacts with 1 SecA dimer.

The protein resides in the cytoplasm. One of the proteins required for the normal export of preproteins out of the cell cytoplasm. It is a molecular chaperone that binds to a subset of precursor proteins, maintaining them in a translocation-competent state. It also specifically binds to its receptor SecA. The sequence is that of Protein-export protein SecB from Coxiella burnetii (strain Dugway 5J108-111).